A 503-amino-acid chain; its full sequence is Sugar phosphate exchanger 3 (503 aa).

A helical membrane pass occupies residues 20-40 (YTHHHLAAFLLTFFSYSLLHA). N-linked (GlcNAc...) asparagine glycosylation is found at N62 and N71. Helical transmembrane passes span 87 to 107 (TLFLGLLDTIFLFAYAVGLFI), 119 to 139 (LVLTFGMCSSAITMFVFGTLT), 152 to 172 (LVWIVNGLLQSTGWPCVVAIM), 183 to 203 (FVFGLWSACASVGNILGAFLA), and 214 to 234 (AFLVTASVQFAGGIIIFFGLV). An N-linked (GlcNAc...) asparagine glycan is attached at N275. 6 helical membrane-spanning segments follow: residues 300–322 (GVLLYSLAYACLKLVNYSFFFWL), 342–362 (IWYDIGGIVGGTVQGLISDLM), 367–387 (PVLTVSLLLAVGALFGYSHSP), 395–415 (FIMSITGFFIGGPSNMISSAI), 437–457 (GIVDGTGSIGAAMGQFLVPLI), and 466–486 (VFYFFIFMICMTTVFMVPLIV).

Belongs to the major facilitator superfamily. Organophosphate:Pi antiporter (OPA) (TC 2.A.1.4) family.

The protein localises to the endoplasmic reticulum membrane. It is found in the lysosome membrane. Its function is as follows. Unlike the other SLC37 members, seems to lack glucose-6-phosphate antiporter activity. The sequence is that of Sugar phosphate exchanger 3 (slc37a3) from Xenopus laevis (African clawed frog).